A 125-amino-acid chain; its full sequence is Small ribosomal subunit protein uS13 (125 aa).

Residues 92-125 (RHRRGLPVRGQRTRTNARTRKGKKKTVGAQAKKK) are disordered.

This sequence belongs to the universal ribosomal protein uS13 family. In terms of assembly, part of the 30S ribosomal subunit. Forms a loose heterodimer with protein S19. Forms two bridges to the 50S subunit in the 70S ribosome.

Located at the top of the head of the 30S subunit, it contacts several helices of the 16S rRNA. In the 70S ribosome it contacts the 23S rRNA (bridge B1a) and protein L5 of the 50S subunit (bridge B1b), connecting the 2 subunits; these bridges are implicated in subunit movement. Contacts the tRNAs in the A and P-sites. The chain is Small ribosomal subunit protein uS13 from Akkermansia muciniphila (strain ATCC BAA-835 / DSM 22959 / JCM 33894 / BCRC 81048 / CCUG 64013 / CIP 107961 / Muc).